Consider the following 137-residue polypeptide: Large ribosomal subunit protein uL16 (137 aa).

Belongs to the universal ribosomal protein uL16 family. As to quaternary structure, part of the 50S ribosomal subunit.

Binds 23S rRNA and is also seen to make contacts with the A and possibly P site tRNAs. The polypeptide is Large ribosomal subunit protein uL16 (Lactococcus lactis subsp. lactis (strain IL1403) (Streptococcus lactis)).